The sequence spans 355 residues: Holliday junction branch migration complex subunit RuvB (355 aa).

A disordered region spans residues 1–43 (MEEMDDFTVRRGEREDITGAAGPPEERPLDPAAFEEDDEPTLR). Positions 4 to 203 (MDDFTVRRGE…FGFSARLDYY (200 aa)) are large ATPase domain (RuvB-L). Over residues 7-17 (FTVRRGEREDI) the composition is skewed to basic and acidic residues. Residues Leu-42, Arg-43, Gly-84, Lys-87, Thr-88, Ser-89, 150–152 (EDF), Arg-193, Tyr-203, and Arg-240 each bind ATP. Position 88 (Thr-88) interacts with Mg(2+). Residues 204 to 274 (EPHELEKIVV…TANAALEMQG (71 aa)) are small ATPAse domain (RuvB-S). The segment at 277–355 (HLGLDRTDRE…HLGFPVRDGG (79 aa)) is head domain (RuvB-H). Residues Arg-313, Arg-332, and Arg-337 each contribute to the DNA site.

This sequence belongs to the RuvB family. Homohexamer. Forms an RuvA(8)-RuvB(12)-Holliday junction (HJ) complex. HJ DNA is sandwiched between 2 RuvA tetramers; dsDNA enters through RuvA and exits via RuvB. An RuvB hexamer assembles on each DNA strand where it exits the tetramer. Each RuvB hexamer is contacted by two RuvA subunits (via domain III) on 2 adjacent RuvB subunits; this complex drives branch migration. In the full resolvosome a probable DNA-RuvA(4)-RuvB(12)-RuvC(2) complex forms which resolves the HJ.

The protein localises to the cytoplasm. It carries out the reaction ATP + H2O = ADP + phosphate + H(+). In terms of biological role, the RuvA-RuvB-RuvC complex processes Holliday junction (HJ) DNA during genetic recombination and DNA repair, while the RuvA-RuvB complex plays an important role in the rescue of blocked DNA replication forks via replication fork reversal (RFR). RuvA specifically binds to HJ cruciform DNA, conferring on it an open structure. The RuvB hexamer acts as an ATP-dependent pump, pulling dsDNA into and through the RuvAB complex. RuvB forms 2 homohexamers on either side of HJ DNA bound by 1 or 2 RuvA tetramers; 4 subunits per hexamer contact DNA at a time. Coordinated motions by a converter formed by DNA-disengaged RuvB subunits stimulates ATP hydrolysis and nucleotide exchange. Immobilization of the converter enables RuvB to convert the ATP-contained energy into a lever motion, pulling 2 nucleotides of DNA out of the RuvA tetramer per ATP hydrolyzed, thus driving DNA branch migration. The RuvB motors rotate together with the DNA substrate, which together with the progressing nucleotide cycle form the mechanistic basis for DNA recombination by continuous HJ branch migration. Branch migration allows RuvC to scan DNA until it finds its consensus sequence, where it cleaves and resolves cruciform DNA. This is Holliday junction branch migration complex subunit RuvB from Rubrobacter xylanophilus (strain DSM 9941 / JCM 11954 / NBRC 16129 / PRD-1).